The sequence spans 335 residues: GTPase Obg (335 aa).

The 159-residue stretch at 1–159 (MKFVDSASIR…REIGLELSIM (159 aa)) folds into the Obg domain. An OBG-type G domain is found at 160–332 (ADIGLLGMPN…LVAGLFKLVK (173 aa)). GTP is bound by residues 166–173 (GMPNAGKS), 191–195 (FTTLH), 212–215 (DIPG), 282–285 (NKMD), and 313–315 (SAL). Mg(2+)-binding residues include serine 173 and threonine 193.

The protein belongs to the TRAFAC class OBG-HflX-like GTPase superfamily. OBG GTPase family. As to quaternary structure, monomer. Requires Mg(2+) as cofactor.

The protein localises to the cytoplasm. An essential GTPase which binds GTP, GDP and possibly (p)ppGpp with moderate affinity, with high nucleotide exchange rates and a fairly low GTP hydrolysis rate. Plays a role in control of the cell cycle, stress response, ribosome biogenesis and in those bacteria that undergo differentiation, in morphogenesis control. The protein is GTPase Obg of Ruthia magnifica subsp. Calyptogena magnifica.